The chain runs to 152 residues: Xanthine-guanine phosphoribosyltransferase (152 aa).

5-phospho-alpha-D-ribose 1-diphosphate is bound by residues 37–38, Arg-69, and 88–96; these read RG and DDLVDTGGT. Arg-69 contributes to the GMP binding site. Asp-89 contacts Mg(2+). Residues Asp-92 and Ile-135 each coordinate guanine. Xanthine-binding residues include Asp-92 and Ile-135. Residues 92-96 and 134-135 contribute to the GMP site; these read DTGGT and WI.

It belongs to the purine/pyrimidine phosphoribosyltransferase family. XGPT subfamily. As to quaternary structure, homotetramer. Mg(2+) is required as a cofactor.

The protein resides in the cell inner membrane. The catalysed reaction is GMP + diphosphate = guanine + 5-phospho-alpha-D-ribose 1-diphosphate. The enzyme catalyses XMP + diphosphate = xanthine + 5-phospho-alpha-D-ribose 1-diphosphate. It catalyses the reaction IMP + diphosphate = hypoxanthine + 5-phospho-alpha-D-ribose 1-diphosphate. The protein operates within purine metabolism; GMP biosynthesis via salvage pathway; GMP from guanine: step 1/1. Its pathway is purine metabolism; XMP biosynthesis via salvage pathway; XMP from xanthine: step 1/1. Its function is as follows. Purine salvage pathway enzyme that catalyzes the transfer of the ribosyl-5-phosphate group from 5-phospho-alpha-D-ribose 1-diphosphate (PRPP) to the N9 position of the 6-oxopurines guanine and xanthine to form the corresponding ribonucleotides GMP (guanosine 5'-monophosphate) and XMP (xanthosine 5'-monophosphate), with the release of PPi. To a lesser extent, also acts on hypoxanthine. This is Xanthine-guanine phosphoribosyltransferase from Pectobacterium atrosepticum (strain SCRI 1043 / ATCC BAA-672) (Erwinia carotovora subsp. atroseptica).